Consider the following 887-residue polypeptide: Fibroblast growth factor receptor 2 (887 aa).

The signal sequence occupies residues 1 to 18; that stretch reads MLNKFIVIVTMLAMWNYA. Topologically, residues 19–416 are extracellular; that stretch reads QDCNFELSKN…KDCVGNSYFT (398 aa). Ig-like C2-type domains follow at residues 22-115 and 180-260; these read NFEL…EFIS and VSGS…LRMK. N-linked (GlcNAc...) asparagine glycosylation is found at asparagine 28, asparagine 74, asparagine 93, asparagine 230, asparagine 261, asparagine 268, asparagine 328, asparagine 334, and asparagine 364. Residues cysteine 43 and cysteine 104 are joined by a disulfide bond. Residues 297-387 form the Ig-like C2-type 3 domain; sequence FNLNSRVCIN…YACRIINFKD (91 aa). An intrachain disulfide couples cysteine 313 to cysteine 380. Residues 417 to 437 form a helical membrane-spanning segment; that stretch reads IIWYSISVGIIILVVISFLII. Over 438-887 the chain is Cytoplasmic; it reads RLYNKYSNGY…SNQCYSTTIV (450 aa). Positions 585-862 constitute a Protein kinase domain; it reads LIIGSKIGEG…IIDKLTHIQL (278 aa). ATP contacts are provided by residues 591 to 599 and lysine 619; that span reads IGEGAFGIV. Aspartate 728 serves as the catalytic Proton acceptor. Position 757 is a phosphotyrosine; by autocatalysis (tyrosine 757).

Belongs to the protein kinase superfamily. Tyr protein kinase family. Fibroblast growth factor receptor subfamily. In terms of tissue distribution, expressed in brain, stem cells and the mesenchymal cells.

The protein resides in the membrane. The enzyme catalyses L-tyrosyl-[protein] + ATP = O-phospho-L-tyrosyl-[protein] + ADP + H(+). Receptor for basic fibroblast growth factor. The sequence is that of Fibroblast growth factor receptor 2 (FGFR2) from Dugesia japonica (Planarian).